Reading from the N-terminus, the 534-residue chain is MEVEGALKLVGEMGIYQIYLSFLLAVLLQLYSATEAIIITILGATPPYHWMNDSLTANGSRGKQYGSQLPAEGEHGHVVFDGNFTSIVSEWFLVGGAAYEVSVSSSVYFGGVLIGVISFGQLSDRFGRKPVYVTGLALEVVFAVMNALTPIFPLFLLTRFLVGVMNGGMSLVAFVLLNECIGASYWAAAGSLGSLCFAVGIAQFALIGYFIRSWRLLALLVNVQGAAVLALSLCIPESPRWLHAQGRLREAQESLLSLGRRNRRKVTSFTLCPRQKDSAHSANILTIYSNAILRQRTLIMMWVWFVCSLVYYGLTLSSGDLGGDIYLNLALSGLAELPAYPLCMYLINHKRVGRRGSLAGFLCVGGGACLLIMLVPGKTGSGPLSVLNSQTLSLLGKLNISAAFNIVYIYSSELYPTCVRNLGMGVCSMFSRIGGIIAPFIPALRFAHWALPFIVFGAAGVSAGLLSLLLPETLSAPLPETLADLRGAPYRRLEPDGEAMLHRPQAELGAFTNGSSEEDEEEELDAVRECQALI.

Residues phenylalanine 22–leucine 42 traverse the membrane as a helical segment. Residues asparagine 52, asparagine 58, and asparagine 83 are each glycosylated (N-linked (GlcNAc...) asparagine). 11 helical membrane-spanning segments follow: residues alanine 97–isoleucine 117, leucine 136–leucine 156, leucine 161–isoleucine 181, serine 191–isoleucine 211, leucine 216–proline 236, threonine 297–serine 317, leucine 327–isoleucine 347, glycine 356–proline 376, threonine 391–serine 411, methionine 424–leucine 444, and alanine 450–leucine 470. N-linked (GlcNAc...) asparagine glycosylation occurs at asparagine 513.

It belongs to the major facilitator (TC 2.A.1) superfamily. Organic cation transporter (TC 2.A.1.19) family.

It localises to the membrane. Probably transports organic cations. This Xenopus tropicalis (Western clawed frog) protein is Solute carrier family 22 member 15 (slc22a15).